A 248-amino-acid chain; its full sequence is MASVNVDFEQAGELKIGQVGIANLRVRTLDVPRLVQEMRERVSRAPKLFGRAAVILDFGGLSQVPDLATAKALLDGLRDAGVLPVALAYGTSEIDLLSQQLGVPLLAKFRAQYEPTAVSPPPPPPPPARAEPAPPAARPAPGRMQRTAVRSGQQLYAENCDLTVLSTVGAGAEVIADGSIHIYGTLRGRALAGAQGNPDARIFCRDFHAELVAIAGHYKVLDDVPMDLRGKAVQVWLEQDQIKIAALD.

A disordered region spans residues 115–144 (PTAVSPPPPPPPPARAEPAPPAARPAPGRM). A compositionally biased stretch (pro residues) spans 118–138 (VSPPPPPPPPARAEPAPPAAR).

The protein belongs to the MinC family. Interacts with MinD and FtsZ.

Functionally, cell division inhibitor that blocks the formation of polar Z ring septums. Rapidly oscillates between the poles of the cell to destabilize FtsZ filaments that have formed before they mature into polar Z rings. Prevents FtsZ polymerization. The sequence is that of Probable septum site-determining protein MinC from Xanthomonas euvesicatoria pv. vesicatoria (strain 85-10) (Xanthomonas campestris pv. vesicatoria).